Here is a 176-residue protein sequence, read N- to C-terminus: UPF0262 protein GbCGDNIH1_1393 (176 aa).

Belongs to the UPF0262 family.

The polypeptide is UPF0262 protein GbCGDNIH1_1393 (Granulibacter bethesdensis (strain ATCC BAA-1260 / CGDNIH1)).